The primary structure comprises 465 residues: Cysteine--tRNA ligase (465 aa).

C29 is a Zn(2+) binding site. The 'HIGH' region signature appears at 31–41 (PTVYNYIHIGN). Residues C209, H234, and E238 each coordinate Zn(2+). The short motif at 266-270 (KMSKS) is the 'KMSKS' region element. Residue K269 participates in ATP binding. S270 carries the post-translational modification Phosphoserine.

It belongs to the class-I aminoacyl-tRNA synthetase family. In terms of assembly, monomer. Zn(2+) is required as a cofactor.

It localises to the cytoplasm. The enzyme catalyses tRNA(Cys) + L-cysteine + ATP = L-cysteinyl-tRNA(Cys) + AMP + diphosphate. The polypeptide is Cysteine--tRNA ligase (Bacillus cytotoxicus (strain DSM 22905 / CIP 110041 / 391-98 / NVH 391-98)).